A 210-amino-acid polypeptide reads, in one-letter code: Small ribosomal subunit protein uS3 (210 aa).

Positions 38–106 (IRAFLKKRLY…EIFINIIEVR (69 aa)) constitute a KH type-2 domain.

The protein belongs to the universal ribosomal protein uS3 family. In terms of assembly, part of the 30S ribosomal subunit. Forms a tight complex with proteins S10 and S14.

Binds the lower part of the 30S subunit head. Binds mRNA in the 70S ribosome, positioning it for translation. The chain is Small ribosomal subunit protein uS3 from Pelobacter propionicus (strain DSM 2379 / NBRC 103807 / OttBd1).